A 778-amino-acid chain; its full sequence is Subtilisin-like protease SBT5.4 (778 aa).

A signal peptide spans 1–35; it reads MSMTRRYSSTQYSNKMSLQSLSSLLLLVTLFFSPA. The Inhibitor I9 domain maps to 41–126; sequence SYIVYLGSHA…VFPNKGRKLH (86 aa). The Peptidase S8 domain occupies 130–634; sequence SWNFMLLAKN…SGHVQPNKAA (505 aa). The active-site Charge relay system is Asp-163. Asn-218 carries an N-linked (GlcNAc...) asparagine glycan. The Charge relay system role is filled by His-230. Asn-253 and Asn-404 each carry an N-linked (GlcNAc...) asparagine glycan. The PA domain maps to 401–486; that stretch reads ANGNVTDALL…KDGETLFSYL (86 aa). The active-site Charge relay system is Ser-567. 3 N-linked (GlcNAc...) asparagine glycosylation sites follow: Asn-657, Asn-690, and Asn-732.

The protein belongs to the peptidase S8 family. Expressed in the vasculature of roots and leaves, stomata, sepals, stigma, anthers and siliques.

The protein resides in the endoplasmic reticulum. It localises to the cell membrane. Serine protease. Has a substrate preference for the hydrophobic residues Phe and Ala and the basic residue Asp in the P1 position, and for Asp, Leu or Ala in the P1' position. Interferes with CLAVATA 3 (CLV3) signaling, but does not cleave CLV3. In Arabidopsis thaliana (Mouse-ear cress), this protein is Subtilisin-like protease SBT5.4.